Reading from the N-terminus, the 282-residue chain is Shikimate dehydrogenase (NADP(+)) (282 aa).

Shikimate is bound by residues 15 to 17 (SKS) and threonine 62. The active-site Proton acceptor is the lysine 66. Positions 87 and 103 each coordinate shikimate. Residues 127–131 (GAGGA), 151–156 (NRTHTK), and methionine 220 contribute to the NADP(+) site. Tyrosine 222 is a binding site for shikimate. Glycine 244 contributes to the NADP(+) binding site.

It belongs to the shikimate dehydrogenase family. As to quaternary structure, homodimer.

It carries out the reaction shikimate + NADP(+) = 3-dehydroshikimate + NADPH + H(+). It participates in metabolic intermediate biosynthesis; chorismate biosynthesis; chorismate from D-erythrose 4-phosphate and phosphoenolpyruvate: step 4/7. Functionally, involved in the biosynthesis of the chorismate, which leads to the biosynthesis of aromatic amino acids. Catalyzes the reversible NADPH linked reduction of 3-dehydroshikimate (DHSA) to yield shikimate (SA). In Shewanella baltica (strain OS185), this protein is Shikimate dehydrogenase (NADP(+)).